Here is a 1008-residue protein sequence, read N- to C-terminus: Translation initiation factor IF-2 (1008 aa).

Disordered stretches follow at residues 113-136 (AVTA…KGNV), 153-235 (DKDS…PAAP), and 253-405 (GLTV…YRKD). Basic and acidic residues-rich tracts occupy residues 153 to 180 (DKDS…KAKP) and 189 to 213 (PKPE…KAET). 2 stretches are compositionally biased toward low complexity: residues 294–329 (GPNK…PRPQ) and 342–358 (GGPN…SNGP). Residues 365–381 (ASEKGEVTGKQIQDKIK) show a composition bias toward basic and acidic residues. One can recognise a tr-type G domain in the interval 507 to 677 (DRAPIVTIMG…LLEAEMLELK (171 aa)). The segment at 516 to 523 (GHVDHGKT) is G1. 516 to 523 (GHVDHGKT) is a GTP binding site. A G2 region spans residues 541 to 545 (GITQH). Positions 563–566 (DTPG) are G3. Residues 563–567 (DTPGH) and 617–620 (NKID) contribute to the GTP site. Residues 617-620 (NKID) are G4. A G5 region spans residues 653–655 (SAK).

The protein belongs to the TRAFAC class translation factor GTPase superfamily. Classic translation factor GTPase family. IF-2 subfamily.

Its subcellular location is the cytoplasm. Functionally, one of the essential components for the initiation of protein synthesis. Protects formylmethionyl-tRNA from spontaneous hydrolysis and promotes its binding to the 30S ribosomal subunits. Also involved in the hydrolysis of GTP during the formation of the 70S ribosomal complex. This chain is Translation initiation factor IF-2, found in Cytophaga hutchinsonii (strain ATCC 33406 / DSM 1761 / CIP 103989 / NBRC 15051 / NCIMB 9469 / D465).